The sequence spans 236 residues: Ubiquinone biosynthesis O-methyltransferase (236 aa).

S-adenosyl-L-methionine contacts are provided by arginine 40, glycine 59, aspartate 80, and leucine 124.

It belongs to the methyltransferase superfamily. UbiG/COQ3 family.

The enzyme catalyses a 3-demethylubiquinol + S-adenosyl-L-methionine = a ubiquinol + S-adenosyl-L-homocysteine + H(+). It carries out the reaction a 3-(all-trans-polyprenyl)benzene-1,2-diol + S-adenosyl-L-methionine = a 2-methoxy-6-(all-trans-polyprenyl)phenol + S-adenosyl-L-homocysteine + H(+). Its pathway is cofactor biosynthesis; ubiquinone biosynthesis. In terms of biological role, O-methyltransferase that catalyzes the 2 O-methylation steps in the ubiquinone biosynthetic pathway. The protein is Ubiquinone biosynthesis O-methyltransferase of Nitrosococcus oceani (strain ATCC 19707 / BCRC 17464 / JCM 30415 / NCIMB 11848 / C-107).